Reading from the N-terminus, the 122-residue chain is Ribonuclease P protein component (122 aa).

Belongs to the RnpA family. As to quaternary structure, consists of a catalytic RNA component (M1 or rnpB) and a protein subunit.

It carries out the reaction Endonucleolytic cleavage of RNA, removing 5'-extranucleotides from tRNA precursor.. In terms of biological role, RNaseP catalyzes the removal of the 5'-leader sequence from pre-tRNA to produce the mature 5'-terminus. It can also cleave other RNA substrates such as 4.5S RNA. The protein component plays an auxiliary but essential role in vivo by binding to the 5'-leader sequence and broadening the substrate specificity of the ribozyme. This chain is Ribonuclease P protein component, found in Synechococcus elongatus (strain ATCC 33912 / PCC 7942 / FACHB-805) (Anacystis nidulans R2).